The sequence spans 274 residues: 2,3,4,5-tetrahydropyridine-2,6-dicarboxylate N-succinyltransferase (274 aa).

Substrate contacts are provided by arginine 104 and aspartate 141.

The protein belongs to the transferase hexapeptide repeat family. Homotrimer.

Its subcellular location is the cytoplasm. The catalysed reaction is (S)-2,3,4,5-tetrahydrodipicolinate + succinyl-CoA + H2O = (S)-2-succinylamino-6-oxoheptanedioate + CoA. It participates in amino-acid biosynthesis; L-lysine biosynthesis via DAP pathway; LL-2,6-diaminopimelate from (S)-tetrahydrodipicolinate (succinylase route): step 1/3. The sequence is that of 2,3,4,5-tetrahydropyridine-2,6-dicarboxylate N-succinyltransferase from Salmonella typhi.